The chain runs to 391 residues: Cell cycle checkpoint control protein RAD9A (391 aa).

Tyrosine 28 carries the post-translational modification Phosphotyrosine. Residues 51–91 (FLFAPLFFQQYQAATPGQDLLRCKILMKSFLSVFRSLAMLE) are possesses 3'-5' exonuclease activity. Positions 266-391 (SDTDSHSQDL…VLAEDSEGEG (126 aa)) are sufficient for interaction with ABL1. Residues 268-282 (TDSHSQDLGSPERHQ) show a composition bias toward basic and acidic residues. 2 disordered regions span residues 268 to 301 (TDSH…FAND) and 319 to 391 (SRVL…EGEG). Phosphoserine occurs at positions 272, 277, and 328. Phosphoserine; by CK2 is present on serine 341. Residues serine 375 and serine 380 each carry the phosphoserine modification. Serine 387 carries the post-translational modification Phosphoserine; by CK2.

The protein belongs to the rad9 family. Component of the toroidal 9-1-1 (RAD9-RAD1-HUS1) complex, composed of RAD9A, RAD1 and HUS1. The 9-1-1 complex associates with LIG1, POLB, FEN1, RAD17, HDAC1, RPA1 and RPA2. The 9-1-1 complex associates with the RAD17-RFC complex. RAD9A interacts with BCL2L1, FEN1, RAD9B, ABL1, RPA1, ATAD5 and RPA2. Interacts with DNAJC7. Interacts (when phosphorylated) with TOPBP1. Constitutively phosphorylated on serine and threonine amino acids in absence of DNA damage. Hyperphosphorylated by PRKCD and ABL1 upon DNA damage. Its phosphorylation by PRKCD may be required for the formation of the 9-1-1 complex. Phosphorylated at Ser-341 and Ser-387 by CK2, promoting interaction with TOPBP1.

The protein localises to the nucleus. It carries out the reaction Exonucleolytic cleavage in the 3'- to 5'-direction to yield nucleoside 5'-phosphates.. In terms of biological role, component of the 9-1-1 cell-cycle checkpoint response complex that plays a major role in DNA repair. The 9-1-1 complex is recruited to DNA lesion upon damage by the RAD17-replication factor C (RFC) clamp loader complex. Acts then as a sliding clamp platform on DNA for several proteins involved in long-patch base excision repair (LP-BER). The 9-1-1 complex stimulates DNA polymerase beta (POLB) activity by increasing its affinity for the 3'-OH end of the primer-template and stabilizes POLB to those sites where LP-BER proceeds; endonuclease FEN1 cleavage activity on substrates with double, nick, or gap flaps of distinct sequences and lengths; and DNA ligase I (LIG1) on long-patch base excision repair substrates. The 9-1-1 complex is necessary for the recruitment of RHNO1 to sites of double-stranded breaks (DSB) occurring during the S phase. RAD9A possesses 3'-&gt;5' double stranded DNA exonuclease activity. The protein is Cell cycle checkpoint control protein RAD9A (RAD9A) of Homo sapiens (Human).